A 258-amino-acid chain; its full sequence is Phosphoribosylaminoimidazole-succinocarboxamide synthase (258 aa).

The protein belongs to the SAICAR synthetase family.

The catalysed reaction is 5-amino-1-(5-phospho-D-ribosyl)imidazole-4-carboxylate + L-aspartate + ATP = (2S)-2-[5-amino-1-(5-phospho-beta-D-ribosyl)imidazole-4-carboxamido]succinate + ADP + phosphate + 2 H(+). The protein operates within purine metabolism; IMP biosynthesis via de novo pathway; 5-amino-1-(5-phospho-D-ribosyl)imidazole-4-carboxamide from 5-amino-1-(5-phospho-D-ribosyl)imidazole-4-carboxylate: step 1/2. The polypeptide is Phosphoribosylaminoimidazole-succinocarboxamide synthase (Rhizorhabdus wittichii (strain DSM 6014 / CCUG 31198 / JCM 15750 / NBRC 105917 / EY 4224 / RW1) (Sphingomonas wittichii)).